We begin with the raw amino-acid sequence, 226 residues long: Ribonuclease 3 (226 aa).

The 123-residue stretch at 6–128 folds into the RNase III domain; the sequence is INRLQRKLGY…LIGGVFLDSD (123 aa). E41 is a binding site for Mg(2+). Residue D45 is part of the active site. Residues D114 and E117 each coordinate Mg(2+). The active site involves E117. One can recognise a DRBM domain in the interval 155-225; it reads DPKTRLQEYL…AEQALKMLEL (71 aa).

The protein belongs to the ribonuclease III family. Homodimer. Requires Mg(2+) as cofactor.

It is found in the cytoplasm. The catalysed reaction is Endonucleolytic cleavage to 5'-phosphomonoester.. Functionally, digests double-stranded RNA. Involved in the processing of primary rRNA transcript to yield the immediate precursors to the large and small rRNAs (23S and 16S). Processes some mRNAs, and tRNAs when they are encoded in the rRNA operon. Processes pre-crRNA and tracrRNA of type II CRISPR loci if present in the organism. The protein is Ribonuclease 3 of Enterobacter sp. (strain 638).